Here is a 156-residue protein sequence, read N- to C-terminus: Lipoprotein signal peptidase (156 aa).

3 helical membrane passes run 5 to 25 (FFVV…TKQW), 63 to 83 (IEWQ…AIIA), and 90 to 110 (SNPY…GNLI). Residues aspartate 120 and aspartate 138 contribute to the active site. A helical membrane pass occupies residues 133–153 (AFNVADMGICVGAFFVCLAVY).

It belongs to the peptidase A8 family.

It localises to the cell inner membrane. It carries out the reaction Release of signal peptides from bacterial membrane prolipoproteins. Hydrolyzes -Xaa-Yaa-Zaa-|-(S,diacylglyceryl)Cys-, in which Xaa is hydrophobic (preferably Leu), and Yaa (Ala or Ser) and Zaa (Gly or Ala) have small, neutral side chains.. Its pathway is protein modification; lipoprotein biosynthesis (signal peptide cleavage). Functionally, this protein specifically catalyzes the removal of signal peptides from prolipoproteins. This is Lipoprotein signal peptidase from Oleidesulfovibrio alaskensis (strain ATCC BAA-1058 / DSM 17464 / G20) (Desulfovibrio alaskensis).